We begin with the raw amino-acid sequence, 293 residues long: Homoserine kinase (293 aa).

Position 83-93 (P83–A93) interacts with ATP.

The protein belongs to the GHMP kinase family. Homoserine kinase subfamily.

Its subcellular location is the cytoplasm. The catalysed reaction is L-homoserine + ATP = O-phospho-L-homoserine + ADP + H(+). It functions in the pathway amino-acid biosynthesis; L-threonine biosynthesis; L-threonine from L-aspartate: step 4/5. Its function is as follows. Catalyzes the ATP-dependent phosphorylation of L-homoserine to L-homoserine phosphate. The protein is Homoserine kinase of Helicobacter pylori (strain J99 / ATCC 700824) (Campylobacter pylori J99).